Consider the following 184-residue polypeptide: Ethylene-responsive transcription factor ERF122 (184 aa).

The AP2/ERF DNA-binding region spans 120 to 177; that stretch reads KYKGVRKKPSGKWAAEIWDPRSKSRRWLGTFLTAEMAAQSYNDAAAEYRARRGKTNGE.

The protein belongs to the AP2/ERF transcription factor family. ERF subfamily.

It is found in the nucleus. Its function is as follows. Probably acts as a transcriptional activator. Binds to the GCC-box pathogenesis-related promoter element. May be involved in the regulation of gene expression by stress factors and by components of stress signal transduction pathways. This Arabidopsis thaliana (Mouse-ear cress) protein is Ethylene-responsive transcription factor ERF122 (ERF122).